Consider the following 429-residue polypeptide: UPF0597 protein GSU1527 (429 aa).

It belongs to the UPF0597 family.

This chain is UPF0597 protein GSU1527, found in Geobacter sulfurreducens (strain ATCC 51573 / DSM 12127 / PCA).